A 222-amino-acid chain; its full sequence is Pyridoxine/pyridoxamine 5'-phosphate oxidase (222 aa).

Substrate-binding positions include 11-14 (RVEY) and Lys-79. FMN is bound by residues 74–79 (RTVLCK), 89–90 (YT), Lys-96, and Gln-118. Residues Tyr-136, Arg-140, and Ser-144 each coordinate substrate. Residues 153–154 (QS) and Trp-199 contribute to the FMN site. 205-207 (RVH) contacts substrate. Residue Arg-209 coordinates FMN.

This sequence belongs to the pyridoxamine 5'-phosphate oxidase family. As to quaternary structure, homodimer. Requires FMN as cofactor.

It catalyses the reaction pyridoxamine 5'-phosphate + O2 + H2O = pyridoxal 5'-phosphate + H2O2 + NH4(+). The catalysed reaction is pyridoxine 5'-phosphate + O2 = pyridoxal 5'-phosphate + H2O2. It participates in cofactor metabolism; pyridoxal 5'-phosphate salvage; pyridoxal 5'-phosphate from pyridoxamine 5'-phosphate: step 1/1. Its pathway is cofactor metabolism; pyridoxal 5'-phosphate salvage; pyridoxal 5'-phosphate from pyridoxine 5'-phosphate: step 1/1. Catalyzes the oxidation of either pyridoxine 5'-phosphate (PNP) or pyridoxamine 5'-phosphate (PMP) into pyridoxal 5'-phosphate (PLP). In Mycolicibacterium vanbaalenii (strain DSM 7251 / JCM 13017 / BCRC 16820 / KCTC 9966 / NRRL B-24157 / PYR-1) (Mycobacterium vanbaalenii), this protein is Pyridoxine/pyridoxamine 5'-phosphate oxidase.